The chain runs to 285 residues: 2-dehydro-3-deoxyphosphooctonate aldolase (285 aa).

It belongs to the KdsA family.

It localises to the cytoplasm. It carries out the reaction D-arabinose 5-phosphate + phosphoenolpyruvate + H2O = 3-deoxy-alpha-D-manno-2-octulosonate-8-phosphate + phosphate. The protein operates within carbohydrate biosynthesis; 3-deoxy-D-manno-octulosonate biosynthesis; 3-deoxy-D-manno-octulosonate from D-ribulose 5-phosphate: step 2/3. It participates in bacterial outer membrane biogenesis; lipopolysaccharide biosynthesis. The chain is 2-dehydro-3-deoxyphosphooctonate aldolase from Polaromonas naphthalenivorans (strain CJ2).